The chain runs to 183 residues: ATP synthase subunit b, chloroplastic (183 aa).

Residues 27 to 49 (LATNPINLSVVLGVLIFFGKGVL) traverse the membrane as a helical segment.

The protein belongs to the ATPase B chain family. As to quaternary structure, F-type ATPases have 2 components, F(1) - the catalytic core - and F(0) - the membrane proton channel. F(1) has five subunits: alpha(3), beta(3), gamma(1), delta(1), epsilon(1). F(0) has four main subunits: a(1), b(1), b'(1) and c(10-14). The alpha and beta chains form an alternating ring which encloses part of the gamma chain. F(1) is attached to F(0) by a central stalk formed by the gamma and epsilon chains, while a peripheral stalk is formed by the delta, b and b' chains.

It is found in the plastid. The protein resides in the chloroplast thylakoid membrane. In terms of biological role, f(1)F(0) ATP synthase produces ATP from ADP in the presence of a proton or sodium gradient. F-type ATPases consist of two structural domains, F(1) containing the extramembraneous catalytic core and F(0) containing the membrane proton channel, linked together by a central stalk and a peripheral stalk. During catalysis, ATP synthesis in the catalytic domain of F(1) is coupled via a rotary mechanism of the central stalk subunits to proton translocation. Functionally, component of the F(0) channel, it forms part of the peripheral stalk, linking F(1) to F(0). The sequence is that of ATP synthase subunit b, chloroplastic from Ranunculus macranthus (Large buttercup).